A 123-amino-acid chain; its full sequence is Late histone H2B.L1 (123 aa).

Residues 1-10 are compositionally biased toward low complexity; sequence MPAKAQPAGK. The disordered stretch occupies residues 1–33; sequence MPAKAQPAGKKGSKKAKAPRPSGGKKRRRRRKE. Residues 11 to 32 are compositionally biased toward basic residues; it reads KGSKKAKAPRPSGGKKRRRRRK. An O-linked (GlcNAc) serine glycan is attached at Ser110. Lys118 participates in a covalent cross-link: Glycyl lysine isopeptide (Lys-Gly) (interchain with G-Cter in ubiquitin).

The protein belongs to the histone H2B family. In terms of assembly, the nucleosome is a histone octamer containing two molecules each of H2A, H2B, H3 and H4 assembled in one H3-H4 heterotetramer and two H2A-H2B heterodimers. The octamer wraps approximately 147 bp of DNA. Post-translationally, monoubiquitination of Lys-118 gives a specific tag for epigenetic transcriptional activation and is also prerequisite for histone H3 'Lys-4' and 'Lys-79' methylation. GlcNAcylation at Ser-110 promotes monoubiquitination of Lys-118. It fluctuates in response to extracellular glucose, and associates with transcribed genes.

The protein localises to the nucleus. The protein resides in the chromosome. Core component of nucleosome. Nucleosomes wrap and compact DNA into chromatin, limiting DNA accessibility to the cellular machineries which require DNA as a template. Histones thereby play a central role in transcription regulation, DNA repair, DNA replication and chromosomal stability. DNA accessibility is regulated via a complex set of post-translational modifications of histones, also called histone code, and nucleosome remodeling. This chain is Late histone H2B.L1, found in Strongylocentrotus purpuratus (Purple sea urchin).